We begin with the raw amino-acid sequence, 138 residues long: MPRPTKTRTVVSEPDVCYFKPRGVPLRMLREVGLTVDELEALMLADLQGLPHEEAGRHMNISRATFGRVVRKARKTVADALVNGMAIRIEGGNYLRTGPDGAVLFCGKCRQEWPVVSSGGTPHECPMCKKEEDKKAEK.

It belongs to the UPF0251 family.

The sequence is that of UPF0251 protein Dole_1957 from Desulfosudis oleivorans (strain DSM 6200 / JCM 39069 / Hxd3) (Desulfococcus oleovorans).